The following is an 891-amino-acid chain: DNA mismatch repair protein MutS (891 aa).

643–650 (GPNMGGKS) serves as a coordination point for ATP.

Belongs to the DNA mismatch repair MutS family.

In terms of biological role, this protein is involved in the repair of mismatches in DNA. It is possible that it carries out the mismatch recognition step. This protein has a weak ATPase activity. This Xanthomonas campestris pv. campestris (strain ATCC 33913 / DSM 3586 / NCPPB 528 / LMG 568 / P 25) protein is DNA mismatch repair protein MutS.